The primary structure comprises 418 residues: UDP-N-acetylglucosamine 1-carboxyvinyltransferase (418 aa).

22 to 23 (KN) is a phosphoenolpyruvate binding site. Residue Arg-92 participates in UDP-N-acetyl-alpha-D-glucosamine binding. Cys-116 acts as the Proton donor in catalysis. Cys-116 bears the 2-(S-cysteinyl)pyruvic acid O-phosphothioketal mark. UDP-N-acetyl-alpha-D-glucosamine contacts are provided by residues 121–125 (RPIDL), Asp-305, and Leu-327.

It belongs to the EPSP synthase family. MurA subfamily.

The protein resides in the cytoplasm. It catalyses the reaction phosphoenolpyruvate + UDP-N-acetyl-alpha-D-glucosamine = UDP-N-acetyl-3-O-(1-carboxyvinyl)-alpha-D-glucosamine + phosphate. It participates in cell wall biogenesis; peptidoglycan biosynthesis. In terms of biological role, cell wall formation. Adds enolpyruvyl to UDP-N-acetylglucosamine. In Campylobacter jejuni subsp. jejuni serotype O:6 (strain 81116 / NCTC 11828), this protein is UDP-N-acetylglucosamine 1-carboxyvinyltransferase.